Reading from the N-terminus, the 350-residue chain is Outer membrane protein A (350 aa).

Residues 1–21 (MKKTAIAIAVALAGFATVAQA) form the signal peptide. The next 8 membrane-spanning stretches (beta stranded) occupy residues 27–37 (TWYAGGKLGWS), 59–70 (QLGAGAFGGYQV), 74–82 (LGFEMGYDW), 100–111 (QAVQLTAKLGYP), 116–124 (LDIYTRLGG), 146–155 (PVFAGGVEWA), 160–167 (IATRLEYQ), and 186–194 (MLSVGVSYR). 4 repeat units span residues 205–206 (AP), 207–208 (AP), 209–210 (AP), and 211–212 (AP). Residues 205–212 (APAPAPAP) form a 4 X 2 AA tandem repeats of A-P region. In terms of domain architecture, OmpA-like spans 214–342 (VTTKTFTLKS…RVAIEVKGYK (129 aa)). The cysteines at positions 315 and 327 are disulfide-linked.

The protein belongs to the outer membrane OOP (TC 1.B.6) superfamily. OmpA family. Monomer and homodimer.

The protein resides in the cell outer membrane. In terms of biological role, with TolR probably plays a role in maintaining the position of the peptidoglycan cell wall in the periplasm. Acts as a porin with low permeability that allows slow penetration of small solutes; an internal gate slows down solute passage. Its function is as follows. Required for conjugation with F-type plasmids; probably serves as the mating receptor on recipient cells. This is Outer membrane protein A from Klebsiella aerogenes (Enterobacter aerogenes).